Consider the following 215-residue polypeptide: ATP-dependent Clp protease proteolytic subunit 1 (215 aa).

Residue Ser-108 is the Nucleophile of the active site. The active site involves His-133.

Belongs to the peptidase S14 family. Fourteen ClpP subunits assemble into 2 heptameric rings which stack back to back to give a disk-like structure with a central cavity, resembling the structure of eukaryotic proteasomes.

It localises to the cytoplasm. It catalyses the reaction Hydrolysis of proteins to small peptides in the presence of ATP and magnesium. alpha-casein is the usual test substrate. In the absence of ATP, only oligopeptides shorter than five residues are hydrolyzed (such as succinyl-Leu-Tyr-|-NHMec, and Leu-Tyr-Leu-|-Tyr-Trp, in which cleavage of the -Tyr-|-Leu- and -Tyr-|-Trp bonds also occurs).. In terms of biological role, cleaves peptides in various proteins in a process that requires ATP hydrolysis. Has a chymotrypsin-like activity. Plays a major role in the degradation of misfolded proteins. This is ATP-dependent Clp protease proteolytic subunit 1 from Paraburkholderia xenovorans (strain LB400).